The sequence spans 539 residues: Phosphoenolpyruvate carboxykinase (ATP) (539 aa).

Positions 64, 206, and 212 each coordinate substrate. ATP contacts are provided by residues K212, H231, and 247–255; that span reads GLSGTGKTT. Positions 212 and 231 each coordinate Mn(2+). A Mn(2+)-binding site is contributed by D268. ATP contacts are provided by residues E296, R332, 448–449, and T454; that span reads RI. R332 lines the substrate pocket.

The protein belongs to the phosphoenolpyruvate carboxykinase (ATP) family. As to quaternary structure, monomer. The cofactor is Mn(2+).

It is found in the cytoplasm. The enzyme catalyses oxaloacetate + ATP = phosphoenolpyruvate + ADP + CO2. Its pathway is carbohydrate biosynthesis; gluconeogenesis. Involved in the gluconeogenesis. Catalyzes the conversion of oxaloacetate (OAA) to phosphoenolpyruvate (PEP) through direct phosphoryl transfer between the nucleoside triphosphate and OAA. This Yersinia pseudotuberculosis serotype IB (strain PB1/+) protein is Phosphoenolpyruvate carboxykinase (ATP).